A 379-amino-acid polypeptide reads, in one-letter code: Guanine nucleotide-binding protein G(s) subunit alpha (379 aa).

Residues Met-1–Lys-25 form a disordered region. Residue Gly-2 is the site of N-palmitoyl glycine attachment. Residue Cys-3 is the site of S-palmitoyl cysteine attachment. Over residues Lys-8–Lys-25 the composition is skewed to basic and acidic residues. The region spanning Ala-39–Leu-379 is the G-alpha domain. The tract at residues Arg-42–Ser-55 is G1 motif. GTP is bound by residues Gly-47 to Ser-55, Leu-182 to Thr-189, Asp-208 to Gln-212, Asn-277 to Asp-280, and Ala-351. Residues Ser-54 and Thr-189 each coordinate Mg(2+). A G2 motif region spans residues Asp-181 to Thr-189. A G3 motif region spans residues Phe-204–Arg-213. Positions Ile-273–Asp-280 are G4 motif. The interval Thr-349–Thr-354 is G5 motif.

The protein belongs to the G-alpha family. G(s) subfamily. Heterotrimeric G proteins are composed of 3 units; alpha, beta and gamma. The alpha chain contains the guanine nucleotide binding site.

Its subcellular location is the cell membrane. In terms of biological role, guanine nucleotide-binding proteins (G proteins) function as transducers in numerous signaling pathways controlled by G protein-coupled receptors (GPCRs). Signaling involves the activation of adenylyl cyclases, resulting in increased levels of the signaling molecule cAMP. GNAS functions downstream of several GPCRs, including beta-adrenergic receptors. Stimulates the Ras signaling pathway. This chain is Guanine nucleotide-binding protein G(s) subunit alpha (gnas), found in Xenopus laevis (African clawed frog).